The chain runs to 782 residues: Protein phosphatase 1 regulatory subunit 12C (782 aa).

Over residues 1–17 the composition is skewed to low complexity; that stretch reads MSGEDGPAAGPGAAAAA. Residues 1–43 form a disordered region; that stretch reads MSGEDGPAAGPGAAAAAARERRREQLRQWGARAGAEPGPGERR. Serine 2 is subject to N-acetylserine. 4 ANK repeats span residues 100-129, 133-162, 226-255, and 259-288; these read DGIS…TVNQ, EGWT…NIAA, TGAS…DPEL, and DGWT…GMDS. The stretch at 297–329 forms a coiled coil; that stretch reads CDLADEEVLSLLEELARKQEDLRNQKEASQSRG. Residues 316–686 form a disordered region; sequence EDLRNQKEAS…EEPDGGFRTL (371 aa). The span at 323–337 shows a compositional bias: polar residues; sequence EASQSRGQEPQAPSS. Residues 349-365 show a composition bias toward basic and acidic residues; it reads SSREKISLQDLSKERRP. The span at 374–383 shows a compositional bias: acidic residues; that stretch reads QDEDEGEEGP. Residues serine 399, serine 407, serine 427, serine 452, and serine 509 each carry the phosphoserine modification. Residues 449–463 show a composition bias toward polar residues; that stretch reads RSASSSWLEGTSTQA. Positions 537–546 are enriched in basic and acidic residues; sequence VRDEESESQR. A compositionally biased stretch (basic residues) spans 547 to 557; sequence KARSRLMRQSR. Position 560 is a phosphothreonine; by CDC42BP and ROCK2 (threonine 560). Positions 567–583 are enriched in basic and acidic residues; the sequence is DLKEAEKAAGKAPESEK. A phosphoserine mark is found at serine 604 and serine 647. Over residues 670–680 the composition is skewed to acidic residues; that stretch reads PEPEPESEEPD. A coiled-coil region spans residues 681–782; that stretch reads GGFRTLYAEL…LIRVISKLSK (102 aa).

PP1 comprises a catalytic subunit, PPP1CA, PPP1CB or PPP1CC, and one or several targeting or regulatory subunits. PPP1R12C mediates binding to myosin. Interacts via its N-terminus with PPP1CB. Interacts with IL16. Interacts with the coiled-coil domain of MPRIP. Interacts with NOD2. Post-translationally, phosphorylation at Thr-560 is essential for its interaction with PPP1CB. Ubiquitously expressed. Highly expressed in heart.

Its subcellular location is the cytoplasm. The protein localises to the cytoskeleton. It localises to the stress fiber. Its function is as follows. Regulates myosin phosphatase activity. The chain is Protein phosphatase 1 regulatory subunit 12C from Homo sapiens (Human).